We begin with the raw amino-acid sequence, 1344 residues long: Xanthine dehydrogenase (1344 aa).

Positions 9–96 (SVLVFFVNGK…GCAVTTVEGI (88 aa)) constitute a 2Fe-2S ferredoxin-type domain. Cys-48, Cys-53, Cys-56, Cys-78, Cys-118, Cys-121, Cys-153, and Cys-155 together coordinate [2Fe-2S] cluster. The region spanning 236–425 (FSSERVTWYR…LGIHFQKTTP (190 aa)) is the FAD-binding PCMH-type domain. FAD contacts are provided by residues 264–271 (LVVGNTEV), Phe-344, 354–358 (CLGGN), Asp-367, Leu-415, and Lys-433. Mo-molybdopterin-binding residues include Gln-781 and Phe-812. 2 residues coordinate substrate: Glu-816 and Arg-894. Arg-926 contributes to the Mo-molybdopterin binding site. Phe-928 is a substrate binding site. Mo-molybdopterin is bound at residue Ala-1093. Glu-1276 functions as the Proton acceptor in the catalytic mechanism.

This sequence belongs to the xanthine dehydrogenase family. Homodimer. FAD is required as a cofactor. It depends on Mo-molybdopterin as a cofactor. Requires [2Fe-2S] cluster as cofactor.

The protein localises to the peroxisome. It catalyses the reaction xanthine + NAD(+) + H2O = urate + NADH + H(+). It carries out the reaction hypoxanthine + NAD(+) + H2O = xanthine + NADH + H(+). Key enzyme in purine degradation. Catalyzes the oxidation of hypoxanthine to xanthine. Catalyzes the oxidation of xanthine to uric acid. The sequence is that of Xanthine dehydrogenase (Xdh) from Drosophila subobscura (Fruit fly).